We begin with the raw amino-acid sequence, 250 residues long: 1-(5-phosphoribosyl)-5-[(5-phosphoribosylamino)methylideneamino] imidazole-4-carboxamide isomerase (250 aa).

The active-site Proton acceptor is the Asp-8. Residue Asp-131 is the Proton donor of the active site.

Belongs to the HisA/HisF family.

The protein localises to the cytoplasm. It catalyses the reaction 1-(5-phospho-beta-D-ribosyl)-5-[(5-phospho-beta-D-ribosylamino)methylideneamino]imidazole-4-carboxamide = 5-[(5-phospho-1-deoxy-D-ribulos-1-ylimino)methylamino]-1-(5-phospho-beta-D-ribosyl)imidazole-4-carboxamide. Its pathway is amino-acid biosynthesis; L-histidine biosynthesis; L-histidine from 5-phospho-alpha-D-ribose 1-diphosphate: step 4/9. This Paraburkholderia phymatum (strain DSM 17167 / CIP 108236 / LMG 21445 / STM815) (Burkholderia phymatum) protein is 1-(5-phosphoribosyl)-5-[(5-phosphoribosylamino)methylideneamino] imidazole-4-carboxamide isomerase.